Here is a 305-residue protein sequence, read N- to C-terminus: Ornithine carbamoyltransferase (305 aa).

Carbamoyl phosphate contacts are provided by residues Ser52–Thr55, Gln79, Arg103, and His130–Gln133. L-ornithine is bound by residues Asn161, Asp221, and Ser225 to Met226. Residues Cys261–Leu262 and Arg289 each bind carbamoyl phosphate.

The protein belongs to the aspartate/ornithine carbamoyltransferase superfamily. OTCase family.

It localises to the cytoplasm. The enzyme catalyses carbamoyl phosphate + L-ornithine = L-citrulline + phosphate + H(+). The protein operates within amino-acid biosynthesis; L-arginine biosynthesis; L-arginine from L-ornithine and carbamoyl phosphate: step 1/3. Its function is as follows. Reversibly catalyzes the transfer of the carbamoyl group from carbamoyl phosphate (CP) to the N(epsilon) atom of ornithine (ORN) to produce L-citrulline. This Methanocorpusculum labreanum (strain ATCC 43576 / DSM 4855 / Z) protein is Ornithine carbamoyltransferase.